The sequence spans 274 residues: Rhamnulose-1-phosphate aldolase (274 aa).

Residue glutamate 117 is part of the active site. Histidine 141, histidine 143, and histidine 212 together coordinate Zn(2+).

It belongs to the aldolase class II family. RhaD subfamily. In terms of assembly, homotetramer. It depends on Zn(2+) as a cofactor.

Its subcellular location is the cytoplasm. It catalyses the reaction L-rhamnulose 1-phosphate = (S)-lactaldehyde + dihydroxyacetone phosphate. It participates in carbohydrate degradation; L-rhamnose degradation; glycerone phosphate from L-rhamnose: step 3/3. Its function is as follows. Catalyzes the reversible cleavage of L-rhamnulose-1-phosphate to dihydroxyacetone phosphate (DHAP) and L-lactaldehyde. The polypeptide is Rhamnulose-1-phosphate aldolase (Escherichia coli (strain SMS-3-5 / SECEC)).